Consider the following 57-residue polypeptide: Metallothionein-2 (57 aa).

Residues Pro-1–Pro-28 form a beta region. 18 residues coordinate a divalent metal cation: Cys-4, Cys-5, Cys-9, Cys-11, Cys-16, Cys-20, Cys-22, Cys-25, Cys-27, Cys-30, Cys-33, Cys-37, Cys-39, Cys-45, Cys-49, Cys-53, Cys-55, and Cys-56. Positions Pro-29–Pro-57 are alpha.

It belongs to the metallothionein superfamily. Type 3 family.

Functionally, metallothioneins have a high content of cysteine residues that bind various heavy metals. Class I MTS in marine crustacea are involved in the sequestration of elevated levels of heavy-metal ions. This Scylla serrata (Mud crab) protein is Metallothionein-2.